We begin with the raw amino-acid sequence, 158 residues long: SsrA-binding protein (158 aa).

This sequence belongs to the SmpB family.

It is found in the cytoplasm. In terms of biological role, required for rescue of stalled ribosomes mediated by trans-translation. Binds to transfer-messenger RNA (tmRNA), required for stable association of tmRNA with ribosomes. tmRNA and SmpB together mimic tRNA shape, replacing the anticodon stem-loop with SmpB. tmRNA is encoded by the ssrA gene; the 2 termini fold to resemble tRNA(Ala) and it encodes a 'tag peptide', a short internal open reading frame. During trans-translation Ala-aminoacylated tmRNA acts like a tRNA, entering the A-site of stalled ribosomes, displacing the stalled mRNA. The ribosome then switches to translate the ORF on the tmRNA; the nascent peptide is terminated with the 'tag peptide' encoded by the tmRNA and targeted for degradation. The ribosome is freed to recommence translation, which seems to be the essential function of trans-translation. This chain is SsrA-binding protein, found in Symbiobacterium thermophilum (strain DSM 24528 / JCM 14929 / IAM 14863 / T).